Here is a 102-residue protein sequence, read N- to C-terminus: NADH-quinone oxidoreductase subunit K (102 aa).

3 helical membrane passes run 5 to 25 (IAHYLTVSAVLFTLGIFGIFL), 31 to 51 (IIILMSIELILLAVNLNFIAF), and 66 to 86 (FVLTVAAAEAAIGLAILVVFF).

The protein belongs to the complex I subunit 4L family. In terms of assembly, NDH-1 is composed of 14 different subunits. Subunits NuoA, H, J, K, L, M, N constitute the membrane sector of the complex.

Its subcellular location is the cell inner membrane. It catalyses the reaction a quinone + NADH + 5 H(+)(in) = a quinol + NAD(+) + 4 H(+)(out). Functionally, NDH-1 shuttles electrons from NADH, via FMN and iron-sulfur (Fe-S) centers, to quinones in the respiratory chain. The immediate electron acceptor for the enzyme in this species is believed to be ubiquinone. Couples the redox reaction to proton translocation (for every two electrons transferred, four hydrogen ions are translocated across the cytoplasmic membrane), and thus conserves the redox energy in a proton gradient. The chain is NADH-quinone oxidoreductase subunit K from Chelativorans sp. (strain BNC1).